Reading from the N-terminus, the 713-residue chain is Polyribonucleotide nucleotidyltransferase (713 aa).

Mg(2+)-binding residues include Asp485 and Asp491. A KH domain is found at 552–611 (PRIHTIKINPEKIKDVIGKGGSVIRALTEETGTNIELDDDGTVRISAVANEAAMEAIRRI). Residues 621-689 (NRIYEGKVVR…RQGRVRLSIK (69 aa)) form the S1 motif domain.

The protein belongs to the polyribonucleotide nucleotidyltransferase family. Component of the RNA degradosome, which is a multiprotein complex involved in RNA processing and mRNA degradation. The cofactor is Mg(2+).

It is found in the cytoplasm. The catalysed reaction is RNA(n+1) + phosphate = RNA(n) + a ribonucleoside 5'-diphosphate. Functionally, involved in mRNA degradation. Catalyzes the phosphorolysis of single-stranded polyribonucleotides processively in the 3'- to 5'-direction. The sequence is that of Polyribonucleotide nucleotidyltransferase from Aeromonas salmonicida (strain A449).